The sequence spans 235 residues: Ribonuclease 3 (235 aa).

The RNase III domain maps to Ile6 to Gly131. Glu44 serves as a coordination point for Mg(2+). The active site involves Asp48. The Mg(2+) site is built by Asp117 and Glu120. Glu120 is an active-site residue. The DRBM domain occupies Asp156–Met225.

This sequence belongs to the ribonuclease III family. Homodimer. The cofactor is Mg(2+).

The protein resides in the cytoplasm. The catalysed reaction is Endonucleolytic cleavage to 5'-phosphomonoester.. Functionally, digests double-stranded RNA. Involved in the processing of primary rRNA transcript to yield the immediate precursors to the large and small rRNAs (23S and 16S). Processes some mRNAs, and tRNAs when they are encoded in the rRNA operon. Processes pre-crRNA and tracrRNA of type II CRISPR loci if present in the organism. This is Ribonuclease 3 from Bartonella bacilliformis (strain ATCC 35685 / KC583 / Herrer 020/F12,63).